The sequence spans 1060 residues: MSTIPGFNQIQFEGFCRFIDQGLAEELSKFPKIEDTNQEIDFEFFLERYQLVEPLIKERDAVYESLTYSSELYVSARLIWKNDRRRYIQEQTILIGKIPIMTSLGAFIVNGIYRIVINQILQSPGIYYQSELNDNGISVYTGTIISDWGGRLELEIDRKARIWVRVSRQQKLSILVLLSAMGLNIREILENVCYPELFLSFLNDKKKIGSKENAILEFYQQFACVEGDPVFSESLSKDLQKKFFQQRCELGGIGRRNMNRRLNLDIPQNNTFLLPRDILAAADRLIRIKFGMGTLDDMNHLQNKRIRSVADLLQEQFGLALVRLENMARGNIYAALKHNWTPTPQNLVNSTPLTDTYKVFFRLHPLSQVLDRTNPLTQIVHGRKLSYLGPGGLTARTATFPIRDIHPSHYGRICPIDTSEGINVGLIGSLAIHARIGRWGSLESPFYQISERSKGAQMLYLSPGRDEYYMVAAGNSLALNQGIQEEQVVPARYRQEFLTIAWEQVQLRSIFAFQYFSIGASLIPFIEHNDANRALMSSNMQRQAVPLSQSEKCIVGTGLEGQAALDSGALAIAEHEGKIFYTDTDKILLSGNGDTLRIPLVMYQRSNKNTCMHQKPQVRRGKCIKKGQILAYGAATVGGELALGKNVLVAYMPWEGYNFEDAVLISERLVYEDIYTSFHIRKYEIQINQGPERVTNEIPHLEVHLLRNLDKNGIVMLGSWVETGDILVGKLTPQMVKESSYAPEDRLLRTILGMRVYTSKETCLKLPIGGRGRVIDVRWVQSSKTDETEKTESIRVYILQKREIKVGDKVAGRHGNKGIISKILPRQDMPYLQDGRPVDMVFNPLGVPSRMNVGQIFESSLGLAGDLLDRHYRIAPFDERYEQEASRKLVFSELYEASKQTANPWIFEPESPGKSRIFDGRTGDPFEQPVIIGKPYILKLIHQVDDKIHGRSSGRYSRLTQQPLKGRAKKGGQRVGEMEVWALEGFGVAYILQEMLTYKSDHIRARQEVLGTIIFGGRIPTPEDAPESFRLFVRELRSLALELNHFLVSEKTFQLNRKEA.

Belongs to the RNA polymerase beta chain family. In terms of assembly, in plastids the minimal PEP RNA polymerase catalytic core is composed of four subunits: alpha, beta, beta', and beta''. When a (nuclear-encoded) sigma factor is associated with the core the holoenzyme is formed, which can initiate transcription.

The protein localises to the plastid. It localises to the chloroplast. It catalyses the reaction RNA(n) + a ribonucleoside 5'-triphosphate = RNA(n+1) + diphosphate. DNA-dependent RNA polymerase catalyzes the transcription of DNA into RNA using the four ribonucleoside triphosphates as substrates. This chain is DNA-directed RNA polymerase subunit beta, found in Helianthus annuus (Common sunflower).